A 226-amino-acid chain; its full sequence is UPF0758 protein GWCH70_2550 (226 aa).

The 123-residue stretch at 104 to 226 (VIRSPEDGAK…FVSLKEKGYV (123 aa)) folds into the MPN domain. Zn(2+) contacts are provided by His175, His177, and Asp188. The JAMM motif signature appears at 175 to 188 (HNHPSGDPTPSRED).

Belongs to the UPF0758 family.

This Geobacillus sp. (strain WCH70) protein is UPF0758 protein GWCH70_2550.